The following is a 633-amino-acid chain: Extracellular metalloproteinase 3 (633 aa).

An N-terminal signal peptide occupies residues 1–18 (MHGLLLAGLLALPMNVLA). Positions 19–246 (HPAEQHASNV…VHNVVDYVAS (228 aa)) are excised as a propeptide. Residue Asn410 is glycosylated (N-linked (GlcNAc...) asparagine). His429 contacts Zn(2+). Residue Glu430 is part of the active site. His433 contributes to the Zn(2+) binding site. Residues Asn480 and Asn622 are each glycosylated (N-linked (GlcNAc...) asparagine).

The protein belongs to the peptidase M36 family. Zn(2+) is required as a cofactor.

It is found in the secreted. In terms of biological role, secreted metalloproteinase probably acting as a virulence factor. This is Extracellular metalloproteinase 3 (MEP3) from Arthroderma benhamiae (Trichophyton mentagrophytes).